The following is a 482-amino-acid chain: Transcription factor Sox-9 (482 aa).

Disordered regions lie at residues 1-66 (MNLL…ETED) and 160-274 (RLRI…FRDV). Low complexity predominate over residues 30–41 (SAGSPCPSGSGS). The span at 42–52 (DTENTRPQENT) shows a compositional bias: polar residues. Basic and acidic residues-rich tracts occupy residues 56-66 (GDPELKKETED) and 160-174 (RLRI…DYKY). Residue Lys61 forms a Glycyl lysine isopeptide (Lys-Gly) (interchain with G-Cter in SUMO) linkage. Residues 63-103 (ETEDEKFPVCIREAVSQVLKGYDWTLVPMPVRVNGSSKSKP) form a dimerization (DIM) region. A PQA region spans residues 63 to 103 (ETEDEKFPVCIREAVSQVLKGYDWTLVPMPVRVNGSSKSKP). A DNA-binding region (HMG box) is located at residues 105-173 (VKRPMNAFMV…QHKKDHPDYK (69 aa)). The span at 211-220 (SPHSASSMSE) shows a compositional bias: polar residues. The interval 224-308 (PGEHSGQSQG…LPPNGHPGVG (85 aa)) is transactivation domain (TAM). 2 consecutive short sequence motifs (9aaTAD) follow at residues 276–285 (IGELSSEVIS) and 291–299 (DVNEFDQYL). The tract at residues 295 to 395 (FDQYLPPNGH…HSPQQLNYSS (101 aa)) is disordered. Polar residues-rich tracts occupy residues 308 to 326 (GSTQ…TPSA) and 351 to 366 (HSLS…SQQR). Residues 366-482 (RTHIKTEQLS…QPVYTQLTRP (117 aa)) form a transactivation domain (TAC) region. Lys370 is covalently cross-linked (Glycyl lysine isopeptide (Lys-Gly) (interchain with G-Cter in SUMO)). Residues 375-390 (SPSHYSDQQQQHSPQQ) show a composition bias toward low complexity. A 9aaTAD 3 motif is present at residues 433–441 (SGLYSNFSY). A disordered region spans residues 448 to 482 (PMYTPIADTTGVPSIPQTHSPQHWEQPVYTQLTRP). Positions 458 to 482 (GVPSIPQTHSPQHWEQPVYTQLTRP) are enriched in polar residues.

In terms of assembly, interacts with the sumoylation factors ube2i/ubc9 and sumo1. In terms of processing, sumoylated. Lys-370 is the major site of sumoylation, although sumoylation at Lys-61 also occurs. Sumoylation plays a key role in regulating formation of the neural crest and otic placode. As to expression, expressed in both male and female gonads from after metamorphosis through to adult stages. In the testis, expression is restricted to the supporting Sertoli-like cells. Conversely in the ovary, expression is localized to primary oocytes (at protein level). In developing limbs, expressed before chrondrocytes form (stage 52 tadpoles) and throughout the cartilaginous anlagen until stage 56, after which expression ceases in the enlarged cells of the diaphysis. At later stages, expression continues in the chondrocytes of the epiphysis and metaphysis, and weak expression is seen in most of the diaphysis.

The protein localises to the nucleus. Its subcellular location is the cytoplasm. Functionally, transcription factor that plays a key role in chondrocytes differentiation and skeletal development. Specifically binds the 5'-ACAAAG-3' DNA motif present in enhancers and super-enhancers and promotes expression of genes important for chondrogenesis, including COL2A1. Plays a central role in successive steps of chondrocyte differentiation. Absolutely required for precartilaginous condensation, the first step in chondrogenesis during which skeletal progenitors differentiate into prechondrocytes. Together with SOX5 and SOX6, required for overt chondrogenesis when condensed prechondrocytes differentiate into early stage chondrocytes, the second step in chondrogenesis. Later, required to direct hypertrophic maturation and block osteoblast differentiation of growth plate chondrocytes: maintains chondrocyte columnar proliferation, delays prehypertrophy and then prevents osteoblastic differentiation of chondrocytes. Also required for chondrocyte hypertrophy, both indirectly, by keeping the lineage fate of chondrocytes, and directly, by remaining present in upper hypertrophic cells. Low lipid levels are the main nutritional determinant for chondrogenic commitment of skeletal progenitor cells: when lipids levels are low, FOXO transcription factors promote expression of SOX9, which induces chondrogenic commitment and suppresses fatty acid oxidation. In addition to cartilage development, also acts as a regulator of proliferation and differentiation in epithelial stem/progenitor cells. Unlikely to play a role in sex determination but may function during testicular and ovarian differentiation. This is Transcription factor Sox-9 from Xenopus tropicalis (Western clawed frog).